The following is a 420-amino-acid chain: Polymerase delta-interacting protein 3 (420 aa).

Position 2 is an N-acetylalanine (Ala2). Ser5 carries the post-translational modification Phosphoserine. An Omega-N-methylarginine modification is found at Arg33. Ser127 is modified (phosphoserine). Thr140 is modified (phosphothreonine). Residue Lys200 forms a Glycyl lysine isopeptide (Lys-Gly) (interchain with G-Cter in SUMO2) linkage. 2 positions are modified to phosphoserine: Ser215 and Ser217. Lys223 participates in a covalent cross-link: Glycyl lysine isopeptide (Lys-Gly) (interchain with G-Cter in SUMO2). Ser244 is subject to Phosphoserine. Lys248 is covalently cross-linked (Glycyl lysine isopeptide (Lys-Gly) (interchain with G-Cter in SUMO2)). The interval 256-277 (TLVNKEEPPKELPPAEPVLSPL) is disordered. At Ser275 the chain carries Phosphoserine. Residues 280–351 (TKMTVNNLHP…QPMKCNLHMN (72 aa)) enclose the RRM domain. A disordered region spans residues 369–394 (PSVKKESELPRRGNPASSNPPAEVDP). The segment covering 370–379 (SVKKESELPR) has biased composition (basic and acidic residues). Lys372 is covalently cross-linked (Glycyl lysine isopeptide (Lys-Gly) (interchain with G-Cter in SUMO2)). Residue Ser385 is modified to Phosphoserine. Lys417 is covalently cross-linked (Glycyl lysine isopeptide (Lys-Gly) (interchain with G-Cter in SUMO2)).

As to quaternary structure, interacts with POLD2. Interacts with NCBP1 and EIF4A3. Associates with the multiprotein exon junction complex (EJC). Interacts with RPS6KB1 (activated). Interacts with ERH. Interacts with THOC2, DDX39B and ZC3H11A; the interactions are ATP-dependent and indicative for an association with the TREX complex.

The protein localises to the nucleus. It is found in the nucleus speckle. The protein resides in the cytoplasm. Functionally, is involved in regulation of translation. Is preferentially associated with CBC-bound spliced mRNA-protein complexes during the pioneer round of mRNA translation. Contributes to enhanced translational efficiency of spliced over nonspliced mRNAs. Recruits activated ribosomal protein S6 kinase beta-1 I/RPS6KB1 to newly synthesized mRNA. Involved in nuclear mRNA export; probably mediated by association with the TREX complex. The protein is Polymerase delta-interacting protein 3 (Poldip3) of Mus musculus (Mouse).